The sequence spans 483 residues: Adenylyltransferase and sulfurtransferase uba4 (483 aa).

ATP-binding positions include G100, D121, 128–132 (SNLHR), K145, and 178–179 (DN). Residues C227 and C230 each coordinate Zn(2+). C244 acts as the Glycyl thioester intermediate; for adenylyltransferase activity in catalysis. Zn(2+)-binding residues include C306 and C309. The 116-residue stretch at 366 to 481 (ISKEPTIIDV…WREQIDPDWP (116 aa)) folds into the Rhodanese domain. C436 acts as the Cysteine persulfide intermediate; for sulfurtransferase activity in catalysis.

This sequence in the N-terminal section; belongs to the HesA/MoeB/ThiF family. UBA4 subfamily. It depends on Zn(2+) as a cofactor.

It localises to the cytoplasm. Its subcellular location is the cytosol. It carries out the reaction [molybdopterin-synthase sulfur-carrier protein]-C-terminal Gly-Gly + ATP + H(+) = [molybdopterin-synthase sulfur-carrier protein]-C-terminal Gly-Gly-AMP + diphosphate. The enzyme catalyses [molybdopterin-synthase sulfur-carrier protein]-C-terminal Gly-Gly-AMP + S-sulfanyl-L-cysteinyl-[cysteine desulfurase] + AH2 = [molybdopterin-synthase sulfur-carrier protein]-C-terminal-Gly-aminoethanethioate + L-cysteinyl-[cysteine desulfurase] + A + AMP + 2 H(+). Its pathway is tRNA modification; 5-methoxycarbonylmethyl-2-thiouridine-tRNA biosynthesis. In terms of biological role, plays a central role in 2-thiolation of mcm(5)S(2)U at tRNA wobble positions of cytosolic tRNA(Lys), tRNA(Glu) and tRNA(Gln). Also essential during biosynthesis of the molybdenum cofactor. Acts by mediating the C-terminal thiocarboxylation of sulfur carriers urm1 and mocs2a. Its N-terminus first activates urm1 and mocs2a as acyl-adenylates (-COAMP), then the persulfide sulfur on the catalytic cysteine is transferred to urm1 and mocs2a to form thiocarboxylation (-COSH) of their C-terminus. The reaction probably involves hydrogen sulfide that is generated from the persulfide intermediate and that acts as a nucleophile towards urm1 and mocs2a. Subsequently, a transient disulfide bond is formed. Does not use thiosulfate as sulfur donor; nfs1 probably acting as a sulfur donor for thiocarboxylation reactions. The polypeptide is Adenylyltransferase and sulfurtransferase uba4 (Neosartorya fischeri (strain ATCC 1020 / DSM 3700 / CBS 544.65 / FGSC A1164 / JCM 1740 / NRRL 181 / WB 181) (Aspergillus fischerianus)).